The sequence spans 355 residues: Ataxin-3 (355 aa).

A Peptide (Met-Gly) (interchain with G-Cter in ubiquitin) cross-link involves residue Met1. Positions 1–180 constitute a Josephin domain; it reads MESIFHEKQE…DCEADQLLQM (180 aa). Cys14 serves as the catalytic Nucleophile. The active-site Proton acceptor is His119. Asn134 is a catalytic residue. Lys200 is covalently cross-linked (Glycyl lysine isopeptide (Lys-Gly) (interchain with G-Cter in ubiquitin)). UIM domains follow at residues 224 to 243 and 244 to 263; these read DDED…IDME and DEEA…SSRG. Positions 257–333 are disordered; that stretch reads MQGSSRGMCE…AGNAMSEEDV (77 aa). A phosphoserine mark is found at Ser268, Ser272, and Ser273. Positions 279–301 are enriched in basic and acidic residues; sequence EELRKRREAYFEKQQHQQQEADR. Polar residues predominate over residues 312-326; sequence PTTSSGGLRSNQAGN. Ser321 carries the post-translational modification Phosphoserine. The UIM 3 domain occupies 329–348; it reads SEEDVLRATVTVSLETAKDS.

In terms of assembly, interacts with STUB1/CHIP (when monoubiquitinated). Interacts with DNA repair proteins RAD23A and RAD23B. Interacts with BECN1 (via its poly-Gln domain). Interacts with PRKN, UBR2, VCP and tubulin. Post-translationally, monoubiquitinated by UBE2W, possibly leading to activate the deubiquitinating enzyme activity. In terms of tissue distribution, ubiquitously expressed.

The protein localises to the nucleus matrix. It localises to the nucleus. Its subcellular location is the lysosome membrane. The catalysed reaction is Thiol-dependent hydrolysis of ester, thioester, amide, peptide and isopeptide bonds formed by the C-terminal Gly of ubiquitin (a 76-residue protein attached to proteins as an intracellular targeting signal).. Deubiquitinating enzyme involved in protein homeostasis maintenance, transcription, cytoskeleton regulation, myogenesis and degradation of misfolded chaperone substrates. Binds long polyubiquitin chains and trims them, while it has weak or no activity against chains of 4 or less ubiquitins. Involved in degradation of misfolded chaperone substrates via its interaction with STUB1/CHIP: recruited to monoubiquitinated STUB1/CHIP, and restricts the length of ubiquitin chain attached to STUB1/CHIP substrates and preventing further chain extension. Interacts with key regulators of transcription and represses transcription: acts as a histone-binding protein that regulates transcription. Acts as a negative regulator of mTORC1 signaling in response to amino acid deprivation by mediating deubiquitination of RHEB, thereby promoting RHEB inactivation by the TSC-TBC complex. Regulates autophagy via the deubiquitination of 'Lys-402' of BECN1 leading to the stabilization of BECN1. The protein is Ataxin-3 (Atxn3) of Rattus norvegicus (Rat).